The chain runs to 740 residues: Polyribonucleotide nucleotidyltransferase (740 aa).

Mg(2+) is bound by residues Asp-492 and Asp-498. The KH domain maps to 559–618; it reads PMVQTLEIQKEKIRDVIGLGGKVIKELCKTFDVEIDISENGEVKVWGNVGENVKKAVQSI. The S1 motif domain occupies 628-696; that stretch reads GDIFDGEVVK…HKNRVKLTLR (69 aa).

It belongs to the polyribonucleotide nucleotidyltransferase family. Mg(2+) is required as a cofactor.

The protein resides in the cytoplasm. The enzyme catalyses RNA(n+1) + phosphate = RNA(n) + a ribonucleoside 5'-diphosphate. Functionally, involved in mRNA degradation. Catalyzes the phosphorolysis of single-stranded polyribonucleotides processively in the 3'- to 5'-direction. This chain is Polyribonucleotide nucleotidyltransferase, found in Orientia tsutsugamushi (strain Boryong) (Rickettsia tsutsugamushi).